An 89-amino-acid polypeptide reads, in one-letter code: LYR motif-containing protein 4 (89 aa).

Belongs to the complex I LYR family.

The protein localises to the mitochondrion. It localises to the nucleus. It functions in the pathway cofactor biosynthesis; iron-sulfur cluster biosynthesis. Functionally, required for nuclear and mitochondrial iron-sulfur protein biosynthesis. The chain is LYR motif-containing protein 4 (lyrm4) from Danio rerio (Zebrafish).